Consider the following 374-residue polypeptide: Chaperone protein DnaJ (374 aa).

The J domain occupies 5-70; the sequence is DYYEVLGVAR…NKRRMYDSHG (66 aa). The CR-type zinc-finger motif lies at 130–207; that stretch reads GVERRIEIPT…CHGNGRVEED (78 aa). The Zn(2+) site is built by Cys-143, Cys-146, Cys-159, Cys-162, Cys-181, Cys-184, Cys-195, and Cys-198. CXXCXGXG motif repeat units follow at residues 143 to 150, 159 to 166, 181 to 188, and 195 to 202; these read CGDCDGSG, CNVCHGRG, CHNCGGRG, and CKTCHGNG.

Belongs to the DnaJ family. Homodimer. Requires Zn(2+) as cofactor.

It localises to the cytoplasm. In terms of biological role, participates actively in the response to hyperosmotic and heat shock by preventing the aggregation of stress-denatured proteins and by disaggregating proteins, also in an autonomous, DnaK-independent fashion. Unfolded proteins bind initially to DnaJ; upon interaction with the DnaJ-bound protein, DnaK hydrolyzes its bound ATP, resulting in the formation of a stable complex. GrpE releases ADP from DnaK; ATP binding to DnaK triggers the release of the substrate protein, thus completing the reaction cycle. Several rounds of ATP-dependent interactions between DnaJ, DnaK and GrpE are required for fully efficient folding. Also involved, together with DnaK and GrpE, in the DNA replication of plasmids through activation of initiation proteins. The polypeptide is Chaperone protein DnaJ (Stenotrophomonas maltophilia (strain K279a)).